The primary structure comprises 197 residues: Recombination protein RecR (197 aa).

The segment at 57–72 adopts a C4-type zinc-finger fold; the sequence is CSVCFGITEDDPCRFC. The 96-residue stretch at 79-174 folds into the Toprim domain; the sequence is GAICVVEEPQ…RVTRLAHGIP (96 aa).

The protein belongs to the RecR family.

May play a role in DNA repair. It seems to be involved in an RecBC-independent recombinational process of DNA repair. It may act with RecF and RecO. The polypeptide is Recombination protein RecR (Geobacter sulfurreducens (strain ATCC 51573 / DSM 12127 / PCA)).